The sequence spans 596 residues: Transketolase-like protein 1 (596 aa).

His46 provides a ligand contact to substrate. Residues Ser49 and 94–96 (GWL) each bind thiamine diphosphate. Asp126 provides a ligand contact to Mg(2+). The thiamine diphosphate site is built by Gly127 and Asn156. Residues Asn156 and Leu158 each coordinate Mg(2+). Residues Lys218 and His232 each coordinate thiamine diphosphate. Substrate contacts are provided by His232, Arg292, and Ser319. Thiamine diphosphate-binding residues include Glu340 and Phe366. The active-site Proton donor is the Glu340. Substrate is bound by residues His390 and Asp398. Gln402 serves as a coordination point for thiamine diphosphate. Arg448 contacts substrate.

Belongs to the transketolase family. As to quaternary structure, homodimer. It depends on Mg(2+) as a cofactor. Ca(2+) serves as cofactor. Mn(2+) is required as a cofactor. Requires Co(2+) as cofactor. The cofactor is thiamine diphosphate. Widely expressed. Expressed in endothelial cells and in peripheral neurons (at protein level). In terms of tissue distribution, not expressed in fetal neocortex. As to expression, expressed in fetal neocortex.

Its subcellular location is the cytoplasm. It carries out the reaction D-sedoheptulose 7-phosphate + D-glyceraldehyde 3-phosphate = aldehydo-D-ribose 5-phosphate + D-xylulose 5-phosphate. Functionally, catalyzes the transfer of a two-carbon ketol group from a ketose donor to an aldose acceptor, via a covalent intermediate with the cofactor thiamine pyrophosphate. Its function is as follows. During fetal neocortex development, may be essential to maintain the full number of basal radial glia (bRG). bRG are neural progenitor cells that undergo asymmetric divisions, generating a bRG (self-renewal) and a neuron, in contrast to basal intermediate progenitors (bIPs), which typically divide once to give rise to 2 neurons. bRG generate more cortical neurons over time than bIPs. This is Transketolase-like protein 1 (TKTL1) from Homo sapiens (Human).